Reading from the N-terminus, the 282-residue chain is Large ribosomal subunit protein uL2 (282 aa).

Residues 223-282 (TVRGSVMNPNDHPHGGGEGRAPIGRKSPVTPWGKKALGVKTRNTKKTSEKLIVRKRSNKK) are disordered.

The protein belongs to the universal ribosomal protein uL2 family. As to quaternary structure, part of the 50S ribosomal subunit. Forms a bridge to the 30S subunit in the 70S ribosome.

Functionally, one of the primary rRNA binding proteins. Required for association of the 30S and 50S subunits to form the 70S ribosome, for tRNA binding and peptide bond formation. It has been suggested to have peptidyltransferase activity; this is somewhat controversial. Makes several contacts with the 16S rRNA in the 70S ribosome. The polypeptide is Large ribosomal subunit protein uL2 (Mycoplasma mycoides subsp. mycoides SC (strain CCUG 32753 / NCTC 10114 / PG1)).